The following is a 519-amino-acid chain: Sensor protein RprX (519 aa).

The next 2 membrane-spanning stretches (helical) occupy residues 5–25 and 260–280; these read TIWILGIIMGLSFLSLLYLQV and IPSMIFTIVLLITFIFTIYIV. The 222-residue stretch at 296–517 folds into the Histidine kinase domain; the sequence is NMTHEFKTPI…KFIIALPLLK (222 aa). Residue His299 is modified to Phosphohistidine; by autocatalysis.

The protein resides in the cell membrane. The catalysed reaction is ATP + protein L-histidine = ADP + protein N-phospho-L-histidine.. Functionally, member of the two-component regulatory system RprX/RprY. May activate RprY by phosphorylation. The protein is Sensor protein RprX (rprX) of Bacteroides fragilis (strain YCH46).